A 182-amino-acid chain; its full sequence is Ribosome-recycling factor (182 aa).

It belongs to the RRF family.

It localises to the cytoplasm. Its function is as follows. Responsible for the release of ribosomes from messenger RNA at the termination of protein biosynthesis. May increase the efficiency of translation by recycling ribosomes from one round of translation to another. In Prochlorococcus marinus (strain MIT 9312), this protein is Ribosome-recycling factor.